Consider the following 387-residue polypeptide: 1-hydroxy-2-naphthoate 1,2-dioxygenasee (387 aa).

2 consecutive Cupin type-2 domains span residues phenylalanine 103 to aspartate 171 and valine 271 to phenylalanine 337.

In terms of assembly, homohexamer. It depends on Fe(2+) as a cofactor.

The enzyme catalyses 1-hydroxy-2-naphthoate + O2 = (3Z)-4-(2-carboxyphenyl)-2-oxobut-3-enoate + H(+). Functionally, dioxygenase involved in phenanthrene catabolism by mediating cleavage of 1-hydroxy-2-naphthoate. This is 1-hydroxy-2-naphthoate 1,2-dioxygenasee (phdI) from Nocardioides sp. (strain KP7).